Reading from the N-terminus, the 103-residue chain is Small ribosomal subunit protein uS10 (103 aa).

This sequence belongs to the universal ribosomal protein uS10 family. Part of the 30S ribosomal subunit.

Its function is as follows. Involved in the binding of tRNA to the ribosomes. In Sphingopyxis alaskensis (strain DSM 13593 / LMG 18877 / RB2256) (Sphingomonas alaskensis), this protein is Small ribosomal subunit protein uS10.